The following is a 191-amino-acid chain: Lipopolysaccharide export system protein LptC (191 aa).

The helical transmembrane segment at 7–25 (WVIIVLSLAVLVMIGINMA) threads the bilayer.

The protein belongs to the LptC family. In terms of assembly, component of the lipopolysaccharide transport and assembly complex. Interacts with LptA and the LptBFG transporter complex.

Its subcellular location is the cell inner membrane. Its function is as follows. Involved in the assembly of lipopolysaccharide (LPS). Required for the translocation of LPS from the inner membrane to the outer membrane. Facilitates the transfer of LPS from the inner membrane to the periplasmic protein LptA. Could be a docking site for LptA. This is Lipopolysaccharide export system protein LptC from Escherichia coli O157:H7.